The chain runs to 1130 residues: Transmembrane channel-like protein 3 (1130 aa).

Over Met-1 to Leu-148 the chain is Cytoplasmic. The helical transmembrane segment at Phe-149 to Ile-169 threads the bilayer. Residues Ala-170 to Asp-192 lie on the Extracellular side of the membrane. Residues Leu-193–Tyr-213 form a helical membrane-spanning segment. Residues Gly-214 to Arg-225 lie on the Cytoplasmic side of the membrane. A helical transmembrane segment spans residues Leu-226–Leu-246. Residues Lys-247–Arg-319 lie on the Extracellular side of the membrane. Asn-264 carries N-linked (GlcNAc...) asparagine glycosylation. The chain crosses the membrane as a helical span at residues Ile-320 to Val-340. Residues Val-341–Glu-361 are Cytoplasmic-facing. The helical transmembrane segment at Val-362–Ala-382 threads the bilayer. The Extracellular portion of the chain corresponds to Leu-383 to Arg-393. A helical membrane pass occupies residues Phe-394–Leu-414. The Cytoplasmic portion of the chain corresponds to Leu-415–Met-509. Residues Leu-510–Phe-530 traverse the membrane as a helical segment. At Arg-531–Gly-570 the chain is on the extracellular side. Residues Met-571–Ile-591 form a helical membrane-spanning segment. At Gly-592–Asn-619 the chain is on the cytoplasmic side. A helical transmembrane segment spans residues Phe-620–Ile-640. The Extracellular segment spans residues Val-641 to His-680. A helical membrane pass occupies residues Ile-681 to Leu-701. At Gln-702–Val-1130 the chain is on the cytoplasmic side. Disordered stretches follow at residues Asp-742–Ser-774, Arg-819–Ile-893, Ser-999–Arg-1019, Gln-1033–Arg-1059, and Gln-1097–Gln-1116. The span at Gly-747–Ile-767 shows a compositional bias: polar residues. Residues Ser-840 to Arg-850 are compositionally biased toward basic and acidic residues. The span at Cys-856–Pro-876 shows a compositional bias: polar residues. 2 stretches are compositionally biased toward basic and acidic residues: residues Lys-878–Phe-890 and Asp-1006–Tyr-1017. The segment covering Gln-1097–Gln-1106 has biased composition (polar residues).

The protein belongs to the TMC family. In terms of tissue distribution, detected in most neuronal organs and also in some non-neuronal tissues.

The protein localises to the membrane. Its function is as follows. Probable component of an ion channel. Molecular function hasn't been characterized yet. In Mus musculus (Mouse), this protein is Transmembrane channel-like protein 3.